The chain runs to 37 residues: Large ribosomal subunit protein bL36c (37 aa).

The protein belongs to the bacterial ribosomal protein bL36 family.

Its subcellular location is the plastid. The protein localises to the chloroplast. This Gracilaria tenuistipitata var. liui (Red alga) protein is Large ribosomal subunit protein bL36c.